A 566-amino-acid polypeptide reads, in one-letter code: Mucolipin-2 (566 aa).

At 1–65 the chain is on the cytoplasmic side; that stretch reads MARQPYRFPQ…YRARRQIPWK (65 aa). Residues 66-86 traverse the membrane as a helical segment; it reads LGLQILKIVMVTTQLVRFGLS. The Extracellular segment spans residues 87-288; the sequence is NQLVVAFKED…IFGSTQKNAQ (202 aa). Residues 107–123 form an extracellular/lumenal pore loop region; the sequence is KGYSGTDEDDYSCSVYT. 2 disulfides stabilise this stretch: Cys-164/Cys-190 and Cys-243/Cys-274. Residues 289-309 form a helical membrane-spanning segment; that stretch reads YVLVFDAFVIVICLASLILCT. Residues 310-346 lie on the Cytoplasmic side of the membrane; the sequence is RSIVLALRLRKRFLNFFLEKYKRPVCDTDQWEFINGW. Residues 347–367 form a helical membrane-spanning segment; sequence YVLVIISDLMTIIGSILKMEI. The Extracellular portion of the chain corresponds to 368-376; sequence KAKNLTNYD. A helical membrane pass occupies residues 377–397; the sequence is LCSIFLGTSTLLVWVGVIRYL. The Cytoplasmic portion of the chain corresponds to 398–419; that stretch reads GYFQAYNVLILTMQASLPKVLR. Residues 420–440 traverse the membrane as a helical segment; sequence FCACAGMIYLGYTFCGWIVLG. Over 441–448 the chain is Extracellular; the sequence is PYHDKFEN. Positions 449-469 form an intramembrane region, pore-forming; sequence LNTVAECLFSLVNGDDMFATF. Positions 461-464 match the Selectivity filter motif; it reads NGDD. Topologically, residues 470–480 are extracellular; it reads AQIQQKSILVW. Residues 481–502 form a helical membrane-spanning segment; sequence LFSRLYLYSFISLFIYMILSLF. Topologically, residues 503 to 566 are cytoplasmic; sequence IALITDSYDT…RSDDHLIPIS (64 aa).

Belongs to the transient receptor (TC 1.A.4) family. Polycystin subfamily. MCOLN2 sub-subfamily. As to quaternary structure, forms homooligomeric complexes; probably tetrameric. Can heterooligomerize with MCOLN1; heteromeric assemblies have different channel properties as compared to the respective homooligomers and may be tissue-specific. Interacts with TMEM176A.

The protein localises to the cell membrane. Its subcellular location is the late endosome membrane. It is found in the lysosome membrane. The protein resides in the recycling endosome membrane. The enzyme catalyses Ca(2+)(in) = Ca(2+)(out). The catalysed reaction is Fe(2+)(in) = Fe(2+)(out). With respect to regulation, channel activity is reduced by low extracellular/lumenal pH level. Nonselective cation channel probably playing a role in the regulation of membrane trafficking events. Acts as a Ca(2+)-permeable cation channel with inwardly rectifying activity. May activate ARF6 and be involved in the trafficking of GPI-anchored cargo proteins to the cell surface via the ARF6-regulated recycling pathway. May play a role in immune processes. In adaptive immunity, TRPML2 and TRPML1 may play redundant roles in the function of the specialized lysosomes of B cells. In the innate immune response, may play a role in the regulation of chemokine secretion and macrophage migration. Through a possible and probably tissue-specific heteromerization with MCOLN1 may be at least in part involved in many lysosome-dependent cellular events. Also functions as a Fe(2+) permeable channel. This chain is Mucolipin-2, found in Homo sapiens (Human).